We begin with the raw amino-acid sequence, 569 residues long: Sialic acid-binding Ig-like lectin 5 (569 aa).

The signal sequence occupies residues 1 to 16 (MRWAWLLPLLWAGCLA). Residues 17–439 (TDGYSLSVTG…KSETSRGTVL (423 aa)) lie on the Extracellular side of the membrane. Residues 18-116 (DGYSLSVTGS…DTGTYFFRLD (99 aa)) form the Ig-like V-type domain. 4 disulfide bridges follow: cysteine 35–cysteine 163, cysteine 40–cysteine 96, cysteine 157–cysteine 206, and cysteine 265–cysteine 308. Asparagine 95 carries N-linked (GlcNAc...) asparagine glycosylation. 3 residues coordinate N-acetylneuraminate: arginine 114, lysine 120, and serine 122. 2 consecutive Ig-like C2-type domains span residues 139 to 224 (PNIQ…QQLS) and 229 to 324 (PQKM…VSLS). 3 N-linked (GlcNAc...) asparagine glycosylation sites follow: asparagine 151, asparagine 200, and asparagine 203. Asparagine 369, asparagine 372, and asparagine 387 each carry an N-linked (GlcNAc...) asparagine glycan. A helical membrane pass occupies residues 440 to 460 (GAIWGAGLMALLAVCLCLIFF). Residues 461–569 (TVKVLRKKSA…VYTEIKIHKC (109 aa)) lie on the Cytoplasmic side of the membrane. Residues 508-556 (HLNEPGSQTQKEQPPLATVPDTQKDEPELHYASLSFQGPMPPKPQNTEA) form a disordered region. An ITIM motif motif is present at residues 536 to 541 (LHYASL). The SLAM-like motif signature appears at 559 to 564 (SVYTEI).

The protein belongs to the immunoglobulin superfamily. SIGLEC (sialic acid binding Ig-like lectin) family. In terms of tissue distribution, predominantly expressed by immature monocytic/myeloid lineage cells in bone marrow. Also found at lower levels in mature neutrophils and monocytes.

Its subcellular location is the membrane. Functionally, putative adhesion molecule that mediates sialic-acid dependent binding to cells. Preferentially binds to alpha-2,3-linked sialic acid. The sialic acid recognition site may be masked by cis interactions with sialic acids on the same cell surface. This Mus musculus (Mouse) protein is Sialic acid-binding Ig-like lectin 5 (Siglec5).